A 494-amino-acid chain; its full sequence is Glutamate--tRNA ligase (494 aa).

The 'HIGH' region signature appears at 10-20 (PSPTGDPHVGT). Zn(2+) contacts are provided by Cys-107, Cys-109, Cys-134, and His-136. A 'KMSKS' region motif is present at residues 251-255 (KLSKR). Position 254 (Lys-254) interacts with ATP.

It belongs to the class-I aminoacyl-tRNA synthetase family. Glutamate--tRNA ligase type 1 subfamily. Monomer. It depends on Zn(2+) as a cofactor.

Its subcellular location is the cytoplasm. The enzyme catalyses tRNA(Glu) + L-glutamate + ATP = L-glutamyl-tRNA(Glu) + AMP + diphosphate. Catalyzes the attachment of glutamate to tRNA(Glu) in a two-step reaction: glutamate is first activated by ATP to form Glu-AMP and then transferred to the acceptor end of tRNA(Glu). The polypeptide is Glutamate--tRNA ligase (Pseudomonas aeruginosa (strain UCBPP-PA14)).